A 791-amino-acid chain; its full sequence is MKINSFLIILILLFISIKNSNGEPEKKFKLITLLAAHVQDLGFNNMVNRGHVEVSKAMKLEDSQAIVVVGYNDTIRILAPLVAVGDVDLVICSSQDHAQACRELATKYKGSSIKTQFLVRGSGEATSNLITYSYNYANANYISGYFAGLYTKTNKIGFLSPGAIDNNNDSFVYAFWYGAKRANPDISFYYYNIGNYLNPDKTVAATKDLLDMGCDMVADTLNDFSTGNTLIANNRKTAMGTSGFPQRDVYGEDVIYSYNYNWFKLFYPVAQSVYSGNTNNTNWYADFNLNETISFFGLSFSFTVPNETLTKFYEELDYLKRTPRLSHPYFCNDLMYEYAKKNHLTMSTNDSTHCLANSQFTRINAPFPGMTWLGNYEITLTEVYQSRPIQIAISSISSFFIVTVLVMMGLVVRFRKNPSIRSASPIFLNFILFGALIIYVGIIIWSSSINSASCNAQFWLVTLGFTTLIGSLVVKNVRIWLIFDNPELKLVKITNLQLVPWVGVCLVINIILMSILTSVGDLREVNAQGIDSLGKYEFMRICKMNSSGASTLYTILAYFAALLLIGVFVSWKIRIVDILEFNESKAIANTLYAISFCLFVIVPLMISPQDKQSEKIILCIAGLFIVTAAVLIIFVPKFYRVYIFGSGGTSDMFYKKKKQSPVATARAESTSKGSSGGGAGSGGATGGSGVKTNKRGNLVSGDFSDDTESSLSEPNKPVKVVAGAVLAEFTDDTISDLDNIDQPIEIITENGQDSNNNNNNEENKDNNIENNKISEEIKENLKNEENNDGDN.

Residues 1–22 (MKINSFLIILILLFISIKNSNG) form the signal peptide. The Extracellular portion of the chain corresponds to 23–390 (EPEKKFKLIT…TEVYQSRPIQ (368 aa)). Asn-72, Asn-168, Asn-279, Asn-290, Asn-306, and Asn-349 each carry an N-linked (GlcNAc...) asparagine glycan. The helical transmembrane segment at 391-411 (IAISSISSFFIVTVLVMMGLV) threads the bilayer. The Cytoplasmic portion of the chain corresponds to 412–424 (VRFRKNPSIRSAS). A helical transmembrane segment spans residues 425 to 445 (PIFLNFILFGALIIYVGIIIW). The Extracellular portion of the chain corresponds to 446-453 (SSSINSAS). The chain crosses the membrane as a helical span at residues 454–474 (CNAQFWLVTLGFTTLIGSLVV). The Cytoplasmic segment spans residues 475–495 (KNVRIWLIFDNPELKLVKITN). Residues 496-516 (LQLVPWVGVCLVINIILMSIL) traverse the membrane as a helical segment. Residues 517–550 (TSVGDLREVNAQGIDSLGKYEFMRICKMNSSGAS) are Extracellular-facing. N-linked (GlcNAc...) asparagine glycosylation occurs at Asn-545. Residues 551 to 571 (TLYTILAYFAALLLIGVFVSW) traverse the membrane as a helical segment. Residues 572–585 (KIRIVDILEFNESK) are Cytoplasmic-facing. A helical membrane pass occupies residues 586–606 (AIANTLYAISFCLFVIVPLMI). Topologically, residues 607–615 (SPQDKQSEK) are extracellular. A helical membrane pass occupies residues 616 to 636 (IILCIAGLFIVTAAVLIIFVP). Topologically, residues 637–791 (KFYRVYIFGS…KNEENNDGDN (155 aa)) are cytoplasmic. 2 disordered regions span residues 664–715 (TARA…SEPN) and 746–791 (IITE…DGDN). Over residues 674–689 (SSGGGAGSGGATGGSG) the composition is skewed to gly residues. The span at 749–760 (ENGQDSNNNNNN) shows a compositional bias: low complexity. A coiled-coil region spans residues 752-781 (QDSNNNNNNEENKDNNIENNKISEEIKENL). The span at 761–785 (EENKDNNIENNKISEEIKENLKNEE) shows a compositional bias: basic and acidic residues.

The protein in the N-terminal section; belongs to the BMP lipoprotein family. In the C-terminal section; belongs to the G-protein coupled receptor 3 family. GABA-B receptor subfamily.

The protein localises to the membrane. The chain is Metabotropic glutamate receptor-like protein D (grlD) from Dictyostelium discoideum (Social amoeba).